Reading from the N-terminus, the 325-residue chain is GTP 3',8-cyclase (325 aa).

Positions 4-219 (NYNRNINYLR…HGLQQKFGLL (216 aa)) constitute a Radical SAM core domain. Arg-13 lines the GTP pocket. Residues Cys-20 and Cys-24 each contribute to the [4Fe-4S] cluster site. Residue Tyr-26 coordinates S-adenosyl-L-methionine. Cys-27 contributes to the [4Fe-4S] cluster binding site. A GTP-binding site is contributed by Arg-63. An S-adenosyl-L-methionine-binding site is contributed by Gly-67. Thr-94 provides a ligand contact to GTP. Residue Ser-118 participates in S-adenosyl-L-methionine binding. Lys-155 contacts GTP. Met-189 is a binding site for S-adenosyl-L-methionine. [4Fe-4S] cluster-binding residues include Cys-254 and Cys-257. 259–261 (RLR) serves as a coordination point for GTP. Cys-271 provides a ligand contact to [4Fe-4S] cluster.

This sequence belongs to the radical SAM superfamily. MoaA family. As to quaternary structure, monomer and homodimer. [4Fe-4S] cluster is required as a cofactor.

The catalysed reaction is GTP + AH2 + S-adenosyl-L-methionine = (8S)-3',8-cyclo-7,8-dihydroguanosine 5'-triphosphate + 5'-deoxyadenosine + L-methionine + A + H(+). It functions in the pathway cofactor biosynthesis; molybdopterin biosynthesis. Its function is as follows. Catalyzes the cyclization of GTP to (8S)-3',8-cyclo-7,8-dihydroguanosine 5'-triphosphate. This Desulforamulus reducens (strain ATCC BAA-1160 / DSM 100696 / MI-1) (Desulfotomaculum reducens) protein is GTP 3',8-cyclase.